A 683-amino-acid chain; its full sequence is Glycine--tRNA ligase beta subunit (683 aa).

The protein belongs to the class-II aminoacyl-tRNA synthetase family. In terms of assembly, tetramer of two alpha and two beta subunits.

The protein resides in the cytoplasm. The catalysed reaction is tRNA(Gly) + glycine + ATP = glycyl-tRNA(Gly) + AMP + diphosphate. This Pseudomonas putida (strain GB-1) protein is Glycine--tRNA ligase beta subunit.